Here is a 161-residue protein sequence, read N- to C-terminus: 6,7-dimethyl-8-ribityllumazine synthase (161 aa).

5-amino-6-(D-ribitylamino)uracil contacts are provided by residues Trp31, 65–67 (TFE), and 89–91 (CVV). Position 94–95 (94–95 (DT)) interacts with (2S)-2-hydroxy-3-oxobutyl phosphate. The Proton donor role is filled by His97. Phe122 is a 5-amino-6-(D-ribitylamino)uracil binding site. Arg136 is a binding site for (2S)-2-hydroxy-3-oxobutyl phosphate.

This sequence belongs to the DMRL synthase family.

It catalyses the reaction (2S)-2-hydroxy-3-oxobutyl phosphate + 5-amino-6-(D-ribitylamino)uracil = 6,7-dimethyl-8-(1-D-ribityl)lumazine + phosphate + 2 H2O + H(+). The protein operates within cofactor biosynthesis; riboflavin biosynthesis; riboflavin from 2-hydroxy-3-oxobutyl phosphate and 5-amino-6-(D-ribitylamino)uracil: step 1/2. Functionally, catalyzes the formation of 6,7-dimethyl-8-ribityllumazine by condensation of 5-amino-6-(D-ribitylamino)uracil with 3,4-dihydroxy-2-butanone 4-phosphate. This is the penultimate step in the biosynthesis of riboflavin. The chain is 6,7-dimethyl-8-ribityllumazine synthase from Porphyromonas gingivalis (strain ATCC 33277 / DSM 20709 / CIP 103683 / JCM 12257 / NCTC 11834 / 2561).